The primary structure comprises 324 residues: Zinc transporter ZIP1 (324 aa).

Residues 1–30 (MGPWGEPELLVWRPEAVASEPSVPVGLEVK) are Extracellular-facing. Residues 31–51 (LGALVLLLLLTLICSLVPVCV) form a helical membrane-spanning segment. Residues 52–68 (LRRSGANHEASASGQKA) lie on the Cytoplasmic side of the membrane. The chain crosses the membrane as a helical span at residues 69–89 (LSLVSCFAGGVFLATCLLDLL). The Extracellular portion of the chain corresponds to 90 to 104 (PDYLAAIDEALEALH). The helical transmembrane segment at 105–125 (VTLQFPLQEFILAMGFFLVLV) threads the bilayer. At 126–179 (MEQITLAYKEQTSPPHPEETRALLGTVNGGPQHWHDGPGIPQAGGTPAAPSALR) the chain is on the cytoplasmic side. Residues 180–200 (ACVLVFSLALHSVFEGLAVGL) form a helical membrane-spanning segment. Residues 201–206 (QRDRAR) are Extracellular-facing. The helical transmembrane segment at 207–227 (AMELCLALLLHKGILAVSLSL) threads the bilayer. Residues 228 to 237 (RLLQSHLRVQ) are Cytoplasmic-facing. A helical transmembrane segment spans residues 238 to 258 (VVAGCGILFSCMTPLGIGLGA). Over 259–272 (ALAESAGPLHQLAQ) the chain is Extracellular. Residues 273–293 (SVLEGMAAGTFLYITFLEILP) traverse the membrane as a helical segment. Topologically, residues 294–303 (QELATSEQRI) are cytoplasmic. A helical transmembrane segment spans residues 304–324 (LKVILLLAGFALLTGLLFVQI).

It belongs to the ZIP transporter (TC 2.A.5) family. In terms of tissue distribution, ubiquitous, except in the pancreas. Highest levels seen in kidney, salivary gland and placenta.

Its subcellular location is the cell membrane. It localises to the endoplasmic reticulum membrane. It carries out the reaction Zn(2+)(in) = Zn(2+)(out). Its function is as follows. Transporter for the divalent cation Zn(2+). Mediates the influx of Zn(2+) into cells from extracellular space. In Mus musculus (Mouse), this protein is Zinc transporter ZIP1 (Slc39a1).